Here is a 512-residue protein sequence, read N- to C-terminus: Cytochrome P450 26B1 (512 aa).

C441 is a heme binding site.

It belongs to the cytochrome P450 family. Requires heme as cofactor.

The protein resides in the endoplasmic reticulum membrane. Its subcellular location is the microsome membrane. It catalyses the reaction all-trans-retinoate + reduced [NADPH--hemoprotein reductase] + O2 = all-trans-4-hydroxyretinoate + oxidized [NADPH--hemoprotein reductase] + H2O + H(+). The enzyme catalyses all-trans-retinoate + reduced [NADPH--hemoprotein reductase] + O2 = all-trans-18-hydroxyretinoate + oxidized [NADPH--hemoprotein reductase] + H2O + H(+). A cytochrome P450 monooxygenase involved in the metabolism of retinoates (RAs), the active metabolites of vitamin A, and critical signaling molecules in animals. RAs exist as at least four different isomers: all-trans-RA (atRA), 9-cis-RA, 13-cis-RA, and 9,13-dicis-RA, where atRA is considered to be the biologically active isomer, although 9-cis-RA and 13-cis-RA also have activity. Catalyzes the hydroxylation of atRA primarily at C-4 and C-18, thereby contributing to the regulation of atRA homeostasis and signaling. Hydroxylation of atRA limits its biological activity and initiates a degradative process leading to its eventual elimination. Involved in the convertion of atRA to all-trans-4-oxo-RA. Can oxidize all-trans-13,14-dihydroretinoate (DRA) to metabolites which could include all-trans-4-oxo-DRA, all-trans-4-hydroxy-DRA, all-trans-5,8-epoxy-DRA, and all-trans-18-hydroxy-DRA. Shows preference for the following substrates: atRA &gt; 9-cis-RA &gt; 13-cis-RA. Plays a central role in germ cell development: acts by degrading RAs in the developing testis, preventing STRA8 expression, thereby leading to delay of meiosis. Required for the maintenance of the undifferentiated state of male germ cells during embryonic development in Sertoli cells, inducing arrest in G0 phase of the cell cycle and preventing meiotic entry. Plays a role in skeletal development, both at the level of patterning and in the ossification of bone and the establishment of some synovial joints. Essential for postnatal survival. In terms of biological role, also has a significant activity in oxidation of tazarotenic acid and may therefore metabolize that xenobiotic in vivo. The chain is Cytochrome P450 26B1 (Cyp26b1) from Rattus norvegicus (Rat).